Here is a 173-residue protein sequence, read N- to C-terminus: MKVILKEDFINLGKEGDTVEVRDGFARNYLLPKGFAVFSNKHNIEIFNQKRRSILKKQEAKKQMANDLKSKLDLVKLEFFMKSNDSGKLFHSINSLNIADELLKLGFDIERKKIDIHHGTLKTFGTYDVTIKLYEGISSIIKVEIKKEKKQEDKKSLSKKLNKADEQGERAEV.

Positions 150–173 are disordered; that stretch reads KQEDKKSLSKKLNKADEQGERAEV.

The protein belongs to the bacterial ribosomal protein bL9 family.

Its function is as follows. Binds to the 23S rRNA. The sequence is that of Large ribosomal subunit protein bL9 from Borreliella burgdorferi (strain ZS7) (Borrelia burgdorferi).